A 223-amino-acid chain; its full sequence is MKRN2 opposite strand protein (223 aa).

The polypeptide is MKRN2 opposite strand protein (MKRN2OS) (Homo sapiens (Human)).